The chain runs to 118 residues: Ribonuclease P protein component (118 aa).

The protein belongs to the RnpA family. Consists of a catalytic RNA component (M1 or rnpB) and a protein subunit.

It carries out the reaction Endonucleolytic cleavage of RNA, removing 5'-extranucleotides from tRNA precursor.. RNaseP catalyzes the removal of the 5'-leader sequence from pre-tRNA to produce the mature 5'-terminus. It can also cleave other RNA substrates such as 4.5S RNA. The protein component plays an auxiliary but essential role in vivo by binding to the 5'-leader sequence and broadening the substrate specificity of the ribozyme. This Rickettsia typhi (strain ATCC VR-144 / Wilmington) protein is Ribonuclease P protein component.